Here is a 229-residue protein sequence, read N- to C-terminus: PHO85 cyclin-5 (229 aa).

Positions 1–24 are enriched in basic and acidic residues; the sequence is MDGNHRFTPDSKEFNTVVKSKESS. Positions 1–46 are disordered; that stretch reads MDGNHRFTPDSKEFNTVVKSKESSTGRNPYQTPPLEHNGTHHQTNY.

This sequence belongs to the cyclin family. PCL1,2 subfamily. Forms a cyclin-CDK complex with PHO85.

Functionally, cyclin partner of the cyclin-dependent kinase (CDK) PHO85. Positively controls degradation of transcription factor GCN4 under favorable growth conditions. The PCL5-PHO85 cyclin-CDK holoenzyme phosphorylates GCN4, which is required for its degradation by the E3 ubiquitin ligase complex SCF(Cdc4). Amino acid starvation reduces PCL5-PHO85-associated GCN4 kinase activity and leads to stabilization of GCN4. In Saccharomyces cerevisiae (strain ATCC 204508 / S288c) (Baker's yeast), this protein is PHO85 cyclin-5 (PCL5).